Consider the following 457-residue polypeptide: C4-dicarboxylate transport protein (457 aa).

7 helical membrane passes run 20 to 42, 51 to 73, 88 to 110, 138 to 158, 166 to 188, 212 to 234, and 241 to 263; these read LYFQ…PAFA, AFIK…TGIA, AMAY…AHVV, LTLV…AFTG, LTGP…LALV, ILMR…KYGV, and AWLV…GLVS.

This sequence belongs to the dicarboxylate/amino acid:cation symporter (DAACS) (TC 2.A.23) family.

Its subcellular location is the cell inner membrane. Functionally, responsible for the transport of dicarboxylates such as succinate, fumarate, and malate from the periplasm across the membrane. This chain is C4-dicarboxylate transport protein, found in Xanthomonas axonopodis pv. citri (strain 306).